Here is a 346-residue protein sequence, read N- to C-terminus: Biotin synthase (346 aa).

Residues 38–256 form the Radical SAM core domain; it reads RQVQVSTLLS…IAVARIMMPT (219 aa). [4Fe-4S] cluster is bound by residues Cys53, Cys57, and Cys60. Residues Cys97, Cys128, Cys188, and Arg260 each coordinate [2Fe-2S] cluster.

The protein belongs to the radical SAM superfamily. Biotin synthase family. Homodimer. Requires [4Fe-4S] cluster as cofactor. [2Fe-2S] cluster is required as a cofactor.

The enzyme catalyses (4R,5S)-dethiobiotin + (sulfur carrier)-SH + 2 reduced [2Fe-2S]-[ferredoxin] + 2 S-adenosyl-L-methionine = (sulfur carrier)-H + biotin + 2 5'-deoxyadenosine + 2 L-methionine + 2 oxidized [2Fe-2S]-[ferredoxin]. The protein operates within cofactor biosynthesis; biotin biosynthesis; biotin from 7,8-diaminononanoate: step 2/2. Its function is as follows. Catalyzes the conversion of dethiobiotin (DTB) to biotin by the insertion of a sulfur atom into dethiobiotin via a radical-based mechanism. This is Biotin synthase from Escherichia fergusonii (strain ATCC 35469 / DSM 13698 / CCUG 18766 / IAM 14443 / JCM 21226 / LMG 7866 / NBRC 102419 / NCTC 12128 / CDC 0568-73).